The chain runs to 473 residues: Aspartyl/glutamyl-tRNA(Asn/Gln) amidotransferase subunit B (473 aa).

This sequence belongs to the GatB/GatE family. GatB subfamily. In terms of assembly, heterotrimer of A, B and C subunits.

It carries out the reaction L-glutamyl-tRNA(Gln) + L-glutamine + ATP + H2O = L-glutaminyl-tRNA(Gln) + L-glutamate + ADP + phosphate + H(+). The catalysed reaction is L-aspartyl-tRNA(Asn) + L-glutamine + ATP + H2O = L-asparaginyl-tRNA(Asn) + L-glutamate + ADP + phosphate + 2 H(+). In terms of biological role, allows the formation of correctly charged Asn-tRNA(Asn) or Gln-tRNA(Gln) through the transamidation of misacylated Asp-tRNA(Asn) or Glu-tRNA(Gln) in organisms which lack either or both of asparaginyl-tRNA or glutaminyl-tRNA synthetases. The reaction takes place in the presence of glutamine and ATP through an activated phospho-Asp-tRNA(Asn) or phospho-Glu-tRNA(Gln). The sequence is that of Aspartyl/glutamyl-tRNA(Asn/Gln) amidotransferase subunit B from Finegoldia magna (strain ATCC 29328 / DSM 20472 / WAL 2508) (Peptostreptococcus magnus).